The chain runs to 571 residues: Apolipoprotein N-acyltransferase (571 aa).

6 helical membrane-spanning segments follow: residues 13–33, 51–68, 72–92, 118–138, 152–172, and 199–219; these read VVLW…IALV, LYAA…GLRY, LMFL…VLFI, LVAA…FTGI, MLIQ…IVCV, and LVTA…SMNA. The region spanning 234–527 is the CN hydrolase domain; that stretch reads NELTVYEQDI…SDVIYAQPRR (294 aa). Residue glutamate 275 is the Proton acceptor of the active site. Residue lysine 380 is part of the active site. Catalysis depends on cysteine 430, which acts as the Nucleophile. The chain crosses the membrane as a helical span at residues 542-562; that stretch reads AGLMGAATLCGLAWMTFEWLM.

The protein belongs to the CN hydrolase family. Apolipoprotein N-acyltransferase subfamily.

The protein localises to the cell inner membrane. It carries out the reaction N-terminal S-1,2-diacyl-sn-glyceryl-L-cysteinyl-[lipoprotein] + a glycerophospholipid = N-acyl-S-1,2-diacyl-sn-glyceryl-L-cysteinyl-[lipoprotein] + a 2-acyl-sn-glycero-3-phospholipid + H(+). It functions in the pathway protein modification; lipoprotein biosynthesis (N-acyl transfer). Functionally, catalyzes the phospholipid dependent N-acylation of the N-terminal cysteine of apolipoprotein, the last step in lipoprotein maturation. This Rhodopirellula baltica (strain DSM 10527 / NCIMB 13988 / SH1) protein is Apolipoprotein N-acyltransferase.